Here is a 292-residue protein sequence, read N- to C-terminus: Fat storage-inducing transmembrane protein 1 (292 aa).

Over 1–18 the chain is Lumenal; it reads MERGPVVGAGLGAGARIQ. The helical transmembrane segment at 19–39 threads the bilayer; it reads ALLGCLLKVLLWVASALLYFG. Over 40 to 54 the chain is Cytoplasmic; the sequence is SEQAARLLGSPCLRR. The helical transmembrane segment at 55 to 75 threads the bilayer; that stretch reads LYHAWLAAVVIFGPLLQFHVN. Over 76-94 the chain is Lumenal; it reads PRTIFASHGNFFNIKFVNS. Residues 95–115 form a helical membrane-spanning segment; the sequence is AWGWTCTFLGGFVLLVVFLAT. Over 116-141 the chain is Cytoplasmic; that stretch reads RRVAVTARHLSRLVVGAAVWRGAGRA. A helical transmembrane segment spans residues 142 to 162; it reads FLLIEDLTGSCFEPLPQGLLL. The Lumenal portion of the chain corresponds to 163–187; sequence HELPDRRSCLAAGHQWRGYTVSSHT. His186 is an active-site residue. A helical membrane pass occupies residues 188-208; it reads FLLTFCCLLMAEEAAVFAKYL. Residues 209-220 lie on the Cytoplasmic side of the membrane; the sequence is AHGLPAGAPLRL. Residues 221–241 traverse the membrane as a helical segment; the sequence is VFLLNVLLLGLWNFLLLCTVI. The Lumenal portion of the chain corresponds to 242 to 249; that stretch reads YFHQYTHK. His244 is an active-site residue. A helical membrane pass occupies residues 250–270; the sequence is VVGAAVGTFAWYLTYGSWYHQ. Residues 271-292 are Cytoplasmic-facing; the sequence is PWSPGSPGHGLFPRPHSSRKHN.

Belongs to the FIT family. FIT1 subfamily. Primarily expressed in heart and skeletal muscle.

Its subcellular location is the endoplasmic reticulum membrane. Its function is as follows. Plays an important role in the formation of lipid droplets (LDs) which are storage organelles at the center of lipid and energy homeostasis. Directly binds to diacylglycerol (DAGs) and triacylglycerol. In Homo sapiens (Human), this protein is Fat storage-inducing transmembrane protein 1.